Here is a 1081-residue protein sequence, read N- to C-terminus: MEATASMGLQGLNGVSYDLSQLDNYLSHATTYVNGNQHLQHPSLPNERISGTVDLSEPPAKRLRRSPSCNESNESNGETSSPAAIIDPSTRLQDVNGGLDRVAGGSESADSMTHDSNEDTSNILSGSATSVSLMYEPSQKNSTPPSTVNNVPSSSSITSDSKGLSGNTDYARYRPRSSIPSKLTAAVYAQQCVTAAYACRLNPYSLHKKEQEALQDHLCHLHVTAYLNIRNGILRLWTRNPMVSVTKDEALGCAKDYRWMGLASFAYEWLVRNGYINFGCVEIPPALVAPKKGRRKDGPVIVVIGAGMAGLGCARQLEGLFKQYHDPLTSPRVVVLEGRRRIGGRIYSHPLRSLQSSKLAPGVVPKAEMGAQIIVGFEHGNPLDQIIRGQLALPYHLLRDISTIYDIDGSAVDEVQDAMDERLYIDVLDRSGLYRHNAVIVPTAEGDRRLIDSGRDLTMSDGLTVRQYEEARAAGTVELLFPNKKVRRGVGHKTADIKATIPPVPTDLGPAEEQPAALACQAMGWKLKDGVPPTASLNLDPVAKASMWPTLGAVMDEGVKQYQRMLPLTPKDMRLINWHFANLEYANATNIGKLSLSGWDQDLGNEFEGEHSQVIGGYQQVPYGLWSLPTKLDVRTNKIVSKIAYDSTGSGKRKTVVHCEDGESFVADKVVFTASLGVLKHHSIEFSPPLPDWKRGAIERLGFGVMNKVILVFEEPFWDTERDMFGLLREPKNRDSMVQEDYAANRGRFYLFWNCMKTTGLPVLIALMAGDAAHQAEYTPDGEIIAEVTSQLRNIFKHVAVPDPLETIITRWASDRFTRGSYSYVAAQALPGDYDLMAKPVGNLHFAGEATCGTHPATVHGAYLSGLRAASEIIESVLGPIEIPNPLVPEKGKAIELGTSVATAQKKKEPPCSNGFSAPVSTSAHPTDASAPARSNNSFSGDTALRQAYEQAMWAAIHAELGPPEPRPARTGLNPFLLYQKDYWGKARAQCDETKQATTKDPNAKAARDEIRQALGLMWRQASEEEKRPYIEQTEVNRQTNTEIWDRWKQNTKEWERKSLEIKKRWCAANPFETWQPPAKR.

The disordered stretch occupies residues 37–173; the sequence is QHLQHPSLPN…LSGNTDYARY (137 aa). The span at 66–81 shows a compositional bias: low complexity; sequence SPSCNESNESNGETSS. Positions 119-132 are enriched in polar residues; it reads DTSNILSGSATSVS. A compositionally biased stretch (low complexity) spans 141 to 161; that stretch reads NSTPPSTVNNVPSSSSITSDS. Residues 192-287 enclose the SWIRM domain; the sequence is CVTAAYACRL…FGCVEIPPAL (96 aa). The interval 902-940 is disordered; that stretch reads ATAQKKKEPPCSNGFSAPVSTSAHPTDASAPARSNNSFS. Polar residues predominate over residues 914-925; it reads NGFSAPVSTSAH. The HMG box DNA-binding region spans 969 to 1049; that stretch reads ARTGLNPFLL…TNTEIWDRWK (81 aa).

The protein belongs to the flavin monoamine oxidase family.

It is found in the nucleus. Functionally, H3K4 demethylase-like protein. Might not act as a H3K4 demethylase or is not the major H3K4 demethylase since its deletion does not affect whole genome H3K4 methylation. This chain is Histone demethylase-like protein A, found in Aspergillus fumigatus (strain ATCC MYA-4609 / CBS 101355 / FGSC A1100 / Af293) (Neosartorya fumigata).